A 201-amino-acid polypeptide reads, in one-letter code: Protease (201 aa).

Residues histidine 55, aspartate 72, and cysteine 122 contribute to the active site.

The protein belongs to the peptidase C5 family. In terms of assembly, interacts with protease cofactor pVI-C; this interaction is necessary for protease activation.

It localises to the virion. It is found in the host nucleus. The enzyme catalyses Cleaves proteins of the adenovirus and its host cell at two consensus sites: -Yaa-Xaa-Gly-Gly-|-Xaa- and -Yaa-Xaa-Gly-Xaa-|-Gly- (in which Yaa is Met, Ile or Leu, and Xaa is any amino acid).. With respect to regulation, requires DNA and protease cofactor for maximal activation. Inside nascent virions, becomes partially activated by binding to the viral DNA, allowing it to cleave the cofactor that binds to the protease and fully activates it. Actin, like the viral protease cofactor, seems to act as a cofactor in the cleavage of cytokeratin 18 and of actin itself. In terms of biological role, cleaves viral precursor proteins (pTP, pIIIa, pVI, pVII, pVIII, and pX) inside newly assembled particles giving rise to mature virions. Protease complexed to its cofactor slides along the viral DNA to specifically locate and cleave the viral precursors. Mature virions have a weakened organization compared to the unmature virions, thereby facilitating subsequent uncoating. Without maturation, the particle lacks infectivity and is unable to uncoat. Late in adenovirus infection, in the cytoplasm, may participate in the cytoskeleton destruction. Cleaves host cell cytoskeletal keratins K7 and K18. This is Protease from Pantherophis guttatus (Corn snake).